The sequence spans 193 residues: Potassium-transporting ATPase KdpC subunit (193 aa).

The chain crosses the membrane as a helical span at residues 7 to 27; sequence PLVVIFAVLTVVTGMAYPAVM.

This sequence belongs to the KdpC family. In terms of assembly, the system is composed of three essential subunits: KdpA, KdpB and KdpC.

The protein resides in the cell inner membrane. Its function is as follows. Part of the high-affinity ATP-driven potassium transport (or Kdp) system, which catalyzes the hydrolysis of ATP coupled with the electrogenic transport of potassium into the cytoplasm. This subunit acts as a catalytic chaperone that increases the ATP-binding affinity of the ATP-hydrolyzing subunit KdpB by the formation of a transient KdpB/KdpC/ATP ternary complex. The sequence is that of Potassium-transporting ATPase KdpC subunit from Burkholderia vietnamiensis (strain G4 / LMG 22486) (Burkholderia cepacia (strain R1808)).